The following is a 644-amino-acid chain: MYSLGNQVKAMVITLRDGTKREFEKGITVYEIAKSISDKLAREAVGGKFNGKIVELNTKIEEDGELEILTFEDEEGKKIYWHTSSHILAQAVKRLFKDVKLAIGPAIDNGFYYDFDTERPFTTEDFEAIEEEMNKIIKEDYKLERFVLSKEEAIKFMKEKDEPYKVELIEEIPEGEEISFYKQGEFVDLCAGPHLPSTGMVKAIKLLSVAGAYWKGDEKNKMLQRIYGISFPKKSMLDEYLHMMEEAKKRDHRKLGKELDLFSIHPEGPGFPFFHPKGMIIRNILEDFWRKEHIKRGYQEIRTPIILNEELWKRSGHWDHYKENMYFTEIDGQTYAIKPMNCPGAMLVYKSTLRSYRDLPLRLCELGLVHRHELSGVLHGLMRVRSFTQDDAHLFMTPEQVEDEILGVINLVDYFYKIFGFEYHVELSTRPENSMGTDEEWELATNALISALKRANLPYKVNEGEGAFYGPKIDFHLKDSIGRTWQCGTIQLDFQMPERFELEYIGPDGEKHRPIMLHRVIYGSIERFIGILTEHFAGAFPTWLAPVQVRVLPISEKHHEYARKVYERLQEHDIRVELDDRNEKIGYKIREAQLQKIPYMLIVGDREVEEGNVSLRSRKDGDLGPISLDNFIEKILKEIATKAL.

The TGS domain maps to 8–70; sequence VKAMVITLRD…EEDGELEILT (63 aa). Residues 251–541 form a catalytic region; the sequence is DHRKLGKELD…LTEHFAGAFP (291 aa). Residues Cys-342, His-393, and His-518 each coordinate Zn(2+).

The protein belongs to the class-II aminoacyl-tRNA synthetase family. In terms of assembly, homodimer. It depends on Zn(2+) as a cofactor.

Its subcellular location is the cytoplasm. The enzyme catalyses tRNA(Thr) + L-threonine + ATP = L-threonyl-tRNA(Thr) + AMP + diphosphate + H(+). In terms of biological role, catalyzes the attachment of threonine to tRNA(Thr) in a two-step reaction: L-threonine is first activated by ATP to form Thr-AMP and then transferred to the acceptor end of tRNA(Thr). Also edits incorrectly charged L-seryl-tRNA(Thr). The polypeptide is Threonine--tRNA ligase (Caldanaerobacter subterraneus subsp. tengcongensis (strain DSM 15242 / JCM 11007 / NBRC 100824 / MB4) (Thermoanaerobacter tengcongensis)).